Here is a 147-residue protein sequence, read N- to C-terminus: Large ribosomal subunit protein uL13 (147 aa).

Belongs to the universal ribosomal protein uL13 family. Part of the 50S ribosomal subunit.

In terms of biological role, this protein is one of the early assembly proteins of the 50S ribosomal subunit, although it is not seen to bind rRNA by itself. It is important during the early stages of 50S assembly. The polypeptide is Large ribosomal subunit protein uL13 (Kocuria rhizophila (strain ATCC 9341 / DSM 348 / NBRC 103217 / DC2201)).